A 372-amino-acid polypeptide reads, in one-letter code: F-box protein AFR (372 aa).

The segment covering 1–15 has biased composition (polar residues); that stretch reads MAEQETTSNINTIND. Residues 1–27 form a disordered region; that stretch reads MAEQETTSNINTINDQAEEETRTKSQP. An F-box domain is found at 29 to 74; it reads ISGLPNDIAELCLLRLPYPYHALYRSVSSSWNKTITNPRFLFSKQS. Kelch repeat units follow at residues 80–126, 135–178, 179–227, 229–276, and 279–325; these read PYLF…HALS, KLFV…NVNG, KIMA…VIGK, MCVT…IRDR, and VISE…DRVF.

In terms of assembly, part of a SCF (ASK-cullin-F-box) protein ligase complex. Interacts with SKP1A.

The protein operates within protein modification; protein ubiquitination. Component of SCF (ASK-cullin-F-box) E3 ubiquitin ligase complexes, which may mediate the ubiquitination and subsequent proteasomal degradation of target proteins. Part of the phyA-mediated signaling transduction pathway leading to the regulation of gene expression and hypocotyls elongation in response to red and far-red light exposure. In Arabidopsis thaliana (Mouse-ear cress), this protein is F-box protein AFR (AFR).